Reading from the N-terminus, the 119-residue chain is MARVKRGVQARARHKKVLKQAKGYYGARSRVYRVAYQAVTKAGQYAYRDRRQRKRQFRQLWIARINAAARQNGLSYSKFINGLKKASIEIDRKILADIAVYDKAAFTFLVEKAQASLAA.

This sequence belongs to the bacterial ribosomal protein bL20 family.

In terms of biological role, binds directly to 23S ribosomal RNA and is necessary for the in vitro assembly process of the 50S ribosomal subunit. It is not involved in the protein synthesizing functions of that subunit. The sequence is that of Large ribosomal subunit protein bL20 from Colwellia psychrerythraea (strain 34H / ATCC BAA-681) (Vibrio psychroerythus).